A 264-amino-acid chain; its full sequence is MGLHFSVLASGSTGNMLYVGTDEKKLLVDAGLSGKATEALFKQAELNINDVSGILVTHEHSDHIKGLGVLARKYDLPVYANEKTWNAMEHLIGNIPTDQKFIFSVGDVKTFGDIEVESFGVSHDAAEPMFYAFHNNNRKLALITDTGYVSDRMKGVIKGANAFVFESNHDVEMLRMGRYPWSIKRRILSDVGHVCNEDAALAMADVITDETKHIYLAHLSLDNNMKELARMSVSQVLEEKGFGVGEAFEIHDTDPKMPTKIQYV.

A divalent metal cation is bound by residues His58, His60, Asp62, His63, and Asp145.

The protein belongs to the metallo-beta-lactamase superfamily. Fe(2+) serves as cofactor. The cofactor is Zn(2+). It depends on Mn(2+) as a cofactor.

5'-&gt;3' double-stranded DNA exonuclease. May play a role in mutation mismatch repair (MMR). Required for accurate coordination of cell division with DNA replication. May play a role in cell wall metabolism. The sequence is that of Exodeoxyribonuclease YycJ from Bacillus anthracis.